We begin with the raw amino-acid sequence, 223 residues long: Ion-translocating oxidoreductase complex subunit E (223 aa).

The next 7 membrane-spanning stretches (helical) occupy residues 17 to 37 (SLVQLLGLCPILAMTTNTINA), 38 to 58 (IGLGITTTFVLTITNSIISIL), 68 to 88 (IPIYMIIVSSTVTCIEMLLHA), 91 to 111 (FNLYQSLGVFIPLIVTNCIVV), 124 to 144 (VISFLDGMSIGLGSTFAMFVI), 156 to 176 (FLFGANKIFNVLDHSFFFTFI), and 181 to 201 (TIILAMLPSGGFLVLGFVIAF).

The protein belongs to the NqrDE/RnfAE family. In terms of assembly, the complex is composed of six subunits: RnfA, RnfB, RnfC, RnfD, RnfE and RnfG.

It is found in the cell inner membrane. In terms of biological role, part of a membrane-bound complex that couples electron transfer with translocation of ions across the membrane. The protein is Ion-translocating oxidoreductase complex subunit E of Buchnera aphidicola subsp. Schizaphis graminum (strain Sg).